The primary structure comprises 1052 residues: SE-cephalotoxin (1052 aa).

The signal sequence occupies residues 1–21 (MMGTSRCVILLFALLLWAANA). Positions 22 to 29 (APPEIHTT) are excised as a propeptide. A glycan (N-linked (GlcNAc...) asparagine) is linked at Asn-41. Residues 130 to 194 (TGVNRKLDQI…DMNKRRLMAE (65 aa)) are a coiled coil. Residue Asn-353 is glycosylated (N-linked (GlcNAc...) asparagine). Residues 460-497 (PGNPCNHGCNGHGECKVVPYTDQFQCFCHGNYEGKMCQ) form the EGF-like domain. Cystine bridges form between Cys-464–Cys-474, Cys-468–Cys-485, and Cys-487–Cys-496. Residues Asn-576 and Asn-715 are each glycosylated (N-linked (GlcNAc...) asparagine). The region spanning 709-769 (TSCPPLNVTH…QWSATPKCES (61 aa)) is the Sushi domain. Cystine bridges form between Cys-711-Cys-752, Cys-739-Cys-767, Cys-780-Cys-814, Cys-784-Cys-820, Cys-795-Cys-804, Cys-829-Cys-847, and Cys-841-Cys-858. The TSP type-1 domain occupies 768–821 (ESSWSRWSKWSACASTCGNATQSRRRRCLGQSESEKCIGPSKQVRKCFVEDCCQ). A glycan (N-linked (GlcNAc...) asparagine) is linked at Asn-786. Positions 819-859 (CCQEKYGKFKCDNNKCISLSRVCDGNDDCRNAEDESKSRCK) constitute an LDL-receptor class A domain.

Monomer. Expressed by the salivary gland.

The protein localises to the secreted. This Acanthosepion esculentum (Golden cuttlefish) protein is SE-cephalotoxin.